The chain runs to 497 residues: Cytochrome P450 2D6 (497 aa).

A substrate-binding site is contributed by D301. C443 lines the heme pocket.

Belongs to the cytochrome P450 family. Heme is required as a cofactor.

The protein resides in the endoplasmic reticulum membrane. It localises to the microsome membrane. The enzyme catalyses (5Z,8Z,11Z,14Z)-eicosatetraenoate + reduced [NADPH--hemoprotein reductase] + O2 = (8R,9S)-epoxy-(5Z,11Z,14Z)-eicosatrienoate + oxidized [NADPH--hemoprotein reductase] + H2O + H(+). It catalyses the reaction (5Z,8Z,11Z,14Z)-eicosatetraenoate + reduced [NADPH--hemoprotein reductase] + O2 = (11R,12S)-epoxy-(5Z,8Z,14Z)-eicosatrienoate + oxidized [NADPH--hemoprotein reductase] + H2O + H(+). It carries out the reaction (5Z,8Z,11Z,14Z)-eicosatetraenoate + reduced [NADPH--hemoprotein reductase] + O2 = (14S,15R)-epoxy-(5Z,8Z,11Z)-eicosatrienoate + oxidized [NADPH--hemoprotein reductase] + H2O + H(+). The catalysed reaction is N-(5Z,8Z,11Z,14Z-eicosatetraenoyl)-ethanolamine + reduced [NADPH--hemoprotein reductase] + O2 = N-(8,9-epoxy-5Z,11Z,14Z-eicosatrienoyl)-ethanolamine + oxidized [NADPH--hemoprotein reductase] + H2O + H(+). The enzyme catalyses N-(5Z,8Z,11Z,14Z-eicosatetraenoyl)-ethanolamine + reduced [NADPH--hemoprotein reductase] + O2 = N-(11,12-epoxy-5Z,8Z,14Z-eicosatrienoyl)-ethanolamine + oxidized [NADPH--hemoprotein reductase] + H2O + H(+). It catalyses the reaction N-(5Z,8Z,11Z,14Z-eicosatetraenoyl)-ethanolamine + reduced [NADPH--hemoprotein reductase] + O2 = N-(14,15-epoxy-5Z,8Z,11Z-eicosatrienoyl)-ethanolamine + oxidized [NADPH--hemoprotein reductase] + H2O + H(+). It carries out the reaction N-(5Z,8Z,11Z,14Z-eicosatetraenoyl)-ethanolamine + reduced [NADPH--hemoprotein reductase] + O2 = N-(20-hydroxy-5Z,8Z,11Z,14Z-eicosatetraenoyl)-ethanolamine + oxidized [NADPH--hemoprotein reductase] + H2O + H(+). The catalysed reaction is (5Z,8Z,11Z,14Z,17Z)-eicosapentaenoate + reduced [NADPH--hemoprotein reductase] + O2 = (17S,18R)-epoxy-(5Z,8Z,11Z,14Z)-eicosatetraenoate + oxidized [NADPH--hemoprotein reductase] + H2O + H(+). The enzyme catalyses (4Z,7Z,10Z,13Z,16Z,19Z)-docosahexaenoate + reduced [NADPH--hemoprotein reductase] + O2 = (19R,20S)-epoxy-(4Z,7Z,10Z,13Z,16Z)-docosapentaenoate + oxidized [NADPH--hemoprotein reductase] + H2O + H(+). It catalyses the reaction (4Z,7Z,10Z,13Z,16Z,19Z)-docosahexaenoate + reduced [NADPH--hemoprotein reductase] + O2 = (19S,20R)-epoxy-(4Z,7Z,10Z,13Z,16Z)-docosapentaenoate + oxidized [NADPH--hemoprotein reductase] + H2O + H(+). It carries out the reaction cholesterol + reduced [NADPH--hemoprotein reductase] + O2 = 25-hydroxycholesterol + oxidized [NADPH--hemoprotein reductase] + H2O + H(+). The catalysed reaction is all-trans-retinol + reduced [NADPH--hemoprotein reductase] + O2 = all-trans-retinal + oxidized [NADPH--hemoprotein reductase] + 2 H2O + H(+). The protein operates within cofactor metabolism; retinol metabolism. It functions in the pathway lipid metabolism; fatty acid metabolism. It participates in steroid metabolism; cholesterol metabolism. A cytochrome P450 monooxygenase involved in the metabolism of fatty acids, steroids and retinoids. Mechanistically, uses molecular oxygen inserting one oxygen atom into a substrate, and reducing the second into a water molecule, with two electrons provided by NADPH via cytochrome P450 reductase (NADPH--hemoprotein reductase). Catalyzes the epoxidation of double bonds of polyunsaturated fatty acids (PUFA). Metabolizes endocannabinoid arachidonoylethanolamide (anandamide) to 20-hydroxyeicosatetraenoic acid ethanolamide (20-HETE-EA) and 8,9-, 11,12-, and 14,15-epoxyeicosatrienoic acid ethanolamides (EpETrE-EAs), potentially modulating endocannabinoid system signaling. Catalyzes the hydroxylation of carbon-hydrogen bonds. Metabolizes cholesterol toward 25-hydroxycholesterol, a physiological regulator of cellular cholesterol homeostasis. Catalyzes the oxidative transformations of all-trans retinol to all-trans retinal, a precursor for the active form all-trans-retinoic acid. Also involved in the oxidative metabolism of drugs such as antiarrhythmics, adrenoceptor antagonists, and tricyclic antidepressants. The chain is Cytochrome P450 2D6 (CYP2D6) from Pan troglodytes (Chimpanzee).